The chain runs to 154 residues: Myoglobin (154 aa).

Residues 2–148 form the Globin domain; that stretch reads GLSDGEWQLV…FRNDIAAKYK (147 aa). Phosphoserine is present on Ser4. His65 serves as a coordination point for nitrite. His65 serves as a coordination point for O2. The residue at position 68 (Thr68) is a Phosphothreonine. His94 provides a ligand contact to heme b.

Belongs to the globin family. As to quaternary structure, monomeric.

Its subcellular location is the cytoplasm. It is found in the sarcoplasm. It carries out the reaction Fe(III)-heme b-[protein] + nitric oxide + H2O = Fe(II)-heme b-[protein] + nitrite + 2 H(+). The catalysed reaction is H2O2 + AH2 = A + 2 H2O. Its function is as follows. Monomeric heme protein which primary function is to store oxygen and facilitate its diffusion within muscle tissues. Reversibly binds oxygen through a pentacoordinated heme iron and enables its timely and efficient release as needed during periods of heightened demand. Depending on the oxidative conditions of tissues and cells, and in addition to its ability to bind oxygen, it also has a nitrite reductase activity whereby it regulates the production of bioactive nitric oxide. Under stress conditions, like hypoxia and anoxia, it also protects cells against reactive oxygen species thanks to its pseudoperoxidase activity. The sequence is that of Myoglobin (MB) from Otolemur crassicaudatus (Brown greater galago).